The following is a 203-amino-acid chain: FMN-dependent NADH:quinone oxidoreductase (203 aa).

FMN contacts are provided by residues Ser-9, 15–17, and 139–142; these read SVS and TRGG.

Belongs to the azoreductase type 1 family. As to quaternary structure, homodimer. The cofactor is FMN.

It carries out the reaction 2 a quinone + NADH + H(+) = 2 a 1,4-benzosemiquinone + NAD(+). The catalysed reaction is N,N-dimethyl-1,4-phenylenediamine + anthranilate + 2 NAD(+) = 2-(4-dimethylaminophenyl)diazenylbenzoate + 2 NADH + 2 H(+). Functionally, quinone reductase that provides resistance to thiol-specific stress caused by electrophilic quinones. Its function is as follows. Also exhibits azoreductase activity. Catalyzes the reductive cleavage of the azo bond in aromatic azo compounds to the corresponding amines. This Albidiferax ferrireducens (strain ATCC BAA-621 / DSM 15236 / T118) (Rhodoferax ferrireducens) protein is FMN-dependent NADH:quinone oxidoreductase.